A 300-amino-acid chain; its full sequence is ClpXP adapter protein SpxH (300 aa).

The protein belongs to the SpxH family. In terms of assembly, interacts with Spx.

The protein localises to the cytoplasm. Its function is as follows. Adapter protein required for efficient degradation of Spx by ClpXP under non-stress conditions. Interaction with Spx stabilizes Spx and exposes the C-terminus of Spx for recognition and proteolysis by ClpXP. The polypeptide is ClpXP adapter protein SpxH (Shouchella clausii (strain KSM-K16) (Alkalihalobacillus clausii)).